The sequence spans 236 residues: Venom metalloproteinase antarease-like TfasMP_A (236 aa).

The region spanning 4-232 is the Peptidase M12B domain; it reads IVVEYYIVTD…KPAASCIFEQ (229 aa). Histidine 161 lines the Zn(2+) pocket. Glutamate 162 is a catalytic residue. Histidine 165 and histidine 171 together coordinate Zn(2+).

It belongs to the venom metalloproteinase (M12B) family. Zn(2+) is required as a cofactor. Contains several disulfide bonds. In terms of tissue distribution, expressed by the venom gland.

The protein resides in the secreted. Inhibited by EDTA. Acts as a metalloprotease. Penetrates intact tissue and specifically cleaves the vesicle-associated membrane protein 2 (VAMP2) (part of the SNARE complex) involved in pancreatic secretion, thus disrupting the normal vesicular traffic. The polypeptide is Venom metalloproteinase antarease-like TfasMP_A (Tityus fasciolatus (Central Brazilian scorpion)).